A 711-amino-acid chain; its full sequence is Methionine--tRNA ligase (711 aa).

The 'HIGH' region signature appears at proline 15–histidine 25. Residues cysteine 147, cysteine 150, cysteine 160, and cysteine 163 each coordinate Zn(2+). Positions lysine 336–serine 340 match the 'KMSKS' region motif. Threonine 339 contributes to the ATP binding site. Residues aspartate 610 to asparagine 711 enclose the tRNA-binding domain.

This sequence belongs to the class-I aminoacyl-tRNA synthetase family. MetG type 1 subfamily. As to quaternary structure, homodimer. It depends on Zn(2+) as a cofactor.

It is found in the cytoplasm. The enzyme catalyses tRNA(Met) + L-methionine + ATP = L-methionyl-tRNA(Met) + AMP + diphosphate. In terms of biological role, is required not only for elongation of protein synthesis but also for the initiation of all mRNA translation through initiator tRNA(fMet) aminoacylation. This Flavobacterium johnsoniae (strain ATCC 17061 / DSM 2064 / JCM 8514 / BCRC 14874 / CCUG 350202 / NBRC 14942 / NCIMB 11054 / UW101) (Cytophaga johnsonae) protein is Methionine--tRNA ligase.